The following is a 275-amino-acid chain: Formamidopyrimidine-DNA glycosylase (275 aa).

The Schiff-base intermediate with DNA role is filled by P2. Catalysis depends on E3, which acts as the Proton donor. K58 (proton donor; for beta-elimination activity) is an active-site residue. DNA contacts are provided by H91 and R110. An FPG-type zinc finger spans residues 238–272; sequence QVYGQTGKPCPRCGQAIVKLKVGGRGTHICPKCQK. R262 acts as the Proton donor; for delta-elimination activity in catalysis.

Belongs to the FPG family. In terms of assembly, monomer. It depends on Zn(2+) as a cofactor.

It carries out the reaction Hydrolysis of DNA containing ring-opened 7-methylguanine residues, releasing 2,6-diamino-4-hydroxy-5-(N-methyl)formamidopyrimidine.. The enzyme catalyses 2'-deoxyribonucleotide-(2'-deoxyribose 5'-phosphate)-2'-deoxyribonucleotide-DNA = a 3'-end 2'-deoxyribonucleotide-(2,3-dehydro-2,3-deoxyribose 5'-phosphate)-DNA + a 5'-end 5'-phospho-2'-deoxyribonucleoside-DNA + H(+). Involved in base excision repair of DNA damaged by oxidation or by mutagenic agents. Acts as a DNA glycosylase that recognizes and removes damaged bases. Has a preference for oxidized purines, such as 7,8-dihydro-8-oxoguanine (8-oxoG). Has AP (apurinic/apyrimidinic) lyase activity and introduces nicks in the DNA strand. Cleaves the DNA backbone by beta-delta elimination to generate a single-strand break at the site of the removed base with both 3'- and 5'-phosphates. The protein is Formamidopyrimidine-DNA glycosylase of Streptococcus pyogenes serotype M28 (strain MGAS6180).